A 326-amino-acid chain; its full sequence is Fructokinase (326 aa).

The tract at residues 275 to 326 is disordered; that stretch reads EQALRNGPDPRRQSRRRHRLPRRRQSTLGARDWSLRLEQDSDPHPPDDTFSP. The segment covering 287–299 has biased composition (basic residues); it reads QSRRRHRLPRRRQ. Residues 307–326 show a composition bias toward basic and acidic residues; that stretch reads WSLRLEQDSDPHPPDDTFSP.

It belongs to the carbohydrate kinase PfkB family.

It carries out the reaction D-fructose + ATP = D-fructose 6-phosphate + ADP + H(+). The polypeptide is Fructokinase (frk) (Rhizobium leguminosarum bv. trifolii).